A 66-amino-acid polypeptide reads, in one-letter code: Large ribosomal subunit protein uL29 (66 aa).

Belongs to the universal ribosomal protein uL29 family.

The sequence is that of Large ribosomal subunit protein uL29 from Helicobacter pylori (strain Shi470).